A 327-amino-acid polypeptide reads, in one-letter code: Vacuolar protein sorting-associated protein 26A (327 aa).

Residues 306–327 (RTNFHQRFESPESQASAEQPEM) form a disordered region. Serine 315 is modified (phosphoserine). Residues 316–327 (PESQASAEQPEM) show a composition bias toward polar residues.

The protein belongs to the VPS26 family. Component of the heterotrimeric retromer cargo-selective complex (CSC), also described as vacuolar protein sorting subcomplex (VPS), formed by VPS26 (VPS26A or VPS26B), VPS29 and VPS35. The CSC has a highly elongated structure with VPS26 and VPS29 binding independently at opposite distal ends of VPS35 as central platform. The CSC is believed to associate with variable sorting nexins to form functionally distinct retromer complex variants. The originally described retromer complex (also called SNX-BAR retromer) is a pentamer containing the CSC and a heterodimeric membrane-deforming subcomplex formed between SNX1 or SNX2 and SNX5 or SNX6 (also called SNX-BAR subcomplex); the respective CSC and SNX-BAR subcomplexes associate with low affinity. The CSC associates with SNX3 to form a SNX3-retromer complex. The CSC associates with SNX27, the WASH complex and the SNX-BAR subcomplex to form the SNX27-retromer complex. Interacts with VPS29, VPS35, SNX1, SNX2, SNX5, SNX6, SNX3, SNX27, RAB7A, ECPAS, EHD1, WASHC5, SORL1.

Its subcellular location is the cytoplasm. It localises to the endosome membrane. The protein localises to the early endosome. Acts as a component of the retromer cargo-selective complex (CSC). The CSC is believed to be the core functional component of retromer or respective retromer complex variants acting to prevent missorting of selected transmembrane cargo proteins into the lysosomal degradation pathway. The recruitment of the CSC to the endosomal membrane involves RAB7A and SNX3. The SNX-BAR retromer mediates retrograde transport of cargo proteins from endosomes to the trans-Golgi network (TGN) and is involved in endosome-to-plasma membrane transport for cargo protein recycling. The SNX3-retromer mediates the retrograde endosome-to-TGN transport of WLS distinct from the SNX-BAR retromer pathway. The SNX27-retromer is believed to be involved in endosome-to-plasma membrane trafficking and recycling of a broad spectrum of cargo proteins. The CSC seems to act as recruitment hub for other proteins, such as the WASH complex and TBC1D5. Required for retrograde transport of lysosomal enzyme receptor IGF2R. Required to regulate transcytosis of the polymeric immunoglobulin receptor (pIgR-pIgA). Required for the endosomal localization of WASHC2A (indicative for the WASH complex). Required for the endosomal localization of TBC1D5. Mediates retromer cargo recognition of SORL1 and is involved in trafficking of SORL1 implicated in sorting and processing of APP. Involved in retromer-independent lysosomal sorting of F2R. Involved in recycling of ADRB2. Enhances the affinity of SNX27 for PDZ-binding motifs in cargo proteins. This chain is Vacuolar protein sorting-associated protein 26A, found in Homo sapiens (Human).